Reading from the N-terminus, the 308-residue chain is Oligopeptide transport ATP-binding protein AmiF (308 aa).

Residues 6–251 (VEIKDLEISF…PIHPYTQALL (246 aa)) form the ABC transporter domain. 42–49 (GESGSGKT) provides a ligand contact to ATP.

Belongs to the ABC transporter superfamily.

The protein localises to the cell membrane. Part of the binding-protein-dependent transport system for oligopeptides. Probably responsible for energy coupling to the transport system. This Streptococcus pneumoniae serotype 4 (strain ATCC BAA-334 / TIGR4) protein is Oligopeptide transport ATP-binding protein AmiF (amiF).